Here is a 208-residue protein sequence, read N- to C-terminus: Non-specific lipid transfer protein GPI-anchored 4 (208 aa).

The first 25 residues, 1–25 (MKQSLLLSFVLLLLSSSSLVTPIHA), serve as a signal peptide directing secretion. 3 N-linked (GlcNAc...) asparagine glycosylation sites follow: asparagine 27, asparagine 67, and asparagine 105. Cystine bridges form between cysteine 48/cysteine 91, cysteine 58/cysteine 75, cysteine 76/cysteine 116, and cysteine 89/cysteine 125. The interval 136 to 181 (GASPVSPSAGAPTTSPSAAKSPETSATSPSSDETPSMTAPSPSSSG) is disordered. Serine 179 carries the GPI-anchor amidated serine lipid modification. The propeptide at 180-208 (SGTNILSVPALTIVFVIVSSVAYISAFSN) is removed in mature form.

The protein belongs to the plant LTP family. In terms of tissue distribution, confined to the anthers and stamen of the inflorescence, especially in pollen.

Its subcellular location is the cell membrane. Lipid transfer protein involved in seed and ovule maturation and development, probably by regulating the fatty acids homeostasis during suberin and sporopollenin biosynthesis or deposition. The protein is Non-specific lipid transfer protein GPI-anchored 4 of Arabidopsis thaliana (Mouse-ear cress).